Reading from the N-terminus, the 307-residue chain is Solute carrier family 25 member 53 (307 aa).

Residues 1–23 (MGEQNHSPGKELQHRTRAEAPGK) form a disordered region. Over residues 8–22 (PGKELQHRTRAEAPG) the composition is skewed to basic and acidic residues. 3 Solcar repeats span residues 25–105 (SWHS…LLCF), 112–202 (HTLG…IQDG), and 210–302 (HWVP…HSRK). The next 6 helical transmembrane spans lie at 31 to 51 (YALG…IYKV), 82 to 102 (YPPL…YDSL), 112 to 132 (HTLG…AVAL), 181 to 201 (VLAR…PIQD), 215 to 235 (LVSG…LIVL), and 269 to 290 (IYRG…TTAI).

Belongs to the mitochondrial carrier (TC 2.A.29) family.

Its subcellular location is the mitochondrion inner membrane. In Homo sapiens (Human), this protein is Solute carrier family 25 member 53 (SLC25A53).